The primary structure comprises 339 residues: 1-aminocyclopropane-1-carboxylate deaminase (339 aa).

Lys52 carries the post-translational modification N6-(pyridoxal phosphate)lysine. Residue Ser79 is the Nucleophile of the active site.

The protein belongs to the ACC deaminase/D-cysteine desulfhydrase family. Homotrimer. Pyridoxal 5'-phosphate is required as a cofactor.

The enzyme catalyses 1-aminocyclopropane-1-carboxylate + H2O = 2-oxobutanoate + NH4(+). Its function is as follows. Catalyzes a cyclopropane ring-opening reaction, the irreversible conversion of 1-aminocyclopropane-1-carboxylate (ACC) to ammonia and alpha-ketobutyrate. Allows growth on ACC as a nitrogen source. The chain is 1-aminocyclopropane-1-carboxylate deaminase from Rhizobium leguminosarum bv. viciae.